A 1178-amino-acid chain; its full sequence is DNA-directed RNA polymerase subunit beta' (1178 aa).

Positions 60, 62, 75, and 78 each coordinate Zn(2+). The Mg(2+) site is built by D450, D452, and D454. Zn(2+) is bound by residues C795, C869, C876, and C879.

It belongs to the RNA polymerase beta' chain family. As to quaternary structure, the RNAP catalytic core consists of 2 alpha, 1 beta, 1 beta' and 1 omega subunit. When a sigma factor is associated with the core the holoenzyme is formed, which can initiate transcription. The cofactor is Mg(2+). Zn(2+) is required as a cofactor.

It catalyses the reaction RNA(n) + a ribonucleoside 5'-triphosphate = RNA(n+1) + diphosphate. DNA-dependent RNA polymerase catalyzes the transcription of DNA into RNA using the four ribonucleoside triphosphates as substrates. This Clostridium botulinum (strain ATCC 19397 / Type A) protein is DNA-directed RNA polymerase subunit beta'.